Here is a 563-residue protein sequence, read N- to C-terminus: MASGSGFLGQISSMEEADFAEKDPSGRYIRYDDVLGRGAFKTVYKAFDEVDGIEVAWNLVSIEDVMQMPGQLERLYSEVHLLKALKHENIIKLFYSWVDEKNKTINMITELFTSGSLRVYRKKHRKVDPKAIKNWARQILKGLNYLHSQNPPVIHRDLKCDNIFVNGNTGEVKIGDLGLATVLQQPTARSVIGTPEFMAPELYEEEYNELVDIYSFGMCMLEMVTCEYPYNECRNQAQIYKKVTSNIKPQSLGKVDDPQVRQFIEKCLLPASSRPTALELSKDPFLARDGGKDSALLASSSTSSKYVRPPQLEHLPMDVDHNENKSVSSNEDYPWSQTIELQRIAENKEFRLRGERSDDVTASMVLRIADPSGKCRIVHFAFYLESDTATAIAEEMVEELHLTSQEVVVIADMIDDFIMQLLSDRTSSHHNQNSPRLTHEDHEAANQQTVNSKDEEAAGQSMKSDISADYYFPYSANDGNAAMEAGRDAESMSSYLDSCSMMSTIYNLSISDNDYPEDLKTELNLIESQFNQSFQDLLKLKEDAIENAKRKWITKKQKAVNIS.

In terms of domain architecture, Protein kinase spans 29-286; it reads IRYDDVLGRG…ALELSKDPFL (258 aa). ATP-binding positions include 109-112 and lysine 159; that span reads TELF. Aspartate 176 (proton acceptor) is an active-site residue. Over residues 426-436 the composition is skewed to polar residues; the sequence is TSSHHNQNSPR. A disordered region spans residues 426–459; the sequence is TSSHHNQNSPRLTHEDHEAANQQTVNSKDEEAAG. Serine 509 is modified (phosphoserine).

The protein belongs to the protein kinase superfamily. Ser/Thr protein kinase family. WNK subfamily. Interacts with RGS1 and GB1, but not with GPA1. The association with RGS1 at the plasma membrane is triggered by induction of glucose. Binds to EDM2 in nucleus. Post-translationally, autophosphorylated.

The protein localises to the nucleus. It catalyses the reaction L-seryl-[protein] + ATP = O-phospho-L-seryl-[protein] + ADP + H(+). The enzyme catalyses L-threonyl-[protein] + ATP = O-phospho-L-threonyl-[protein] + ADP + H(+). Its function is as follows. Regulates flowering time by modulating the photoperiod pathway. Phosphorylates the vacuolar ATPase subunit C (VATC) and RGS1. Regulates EDM2 that, in turn, modulates development processes. The chain is Serine/threonine-protein kinase WNK8 (WNK8) from Arabidopsis thaliana (Mouse-ear cress).